A 431-amino-acid chain; its full sequence is IMP-specific 5'-nucleotidase 1 (431 aa).

Position 117 (lysine 117) interacts with ATP. The active-site Nucleophile is the aspartate 157. Aspartate 157, aspartate 159, aspartate 165, threonine 193, aspartate 349, and lysine 357 together coordinate IMP. The Mg(2+) site is built by aspartate 157 and aspartate 159. Catalysis depends on aspartate 159, which acts as the Proton donor. Aspartate 388 serves as a coordination point for Mg(2+).

It belongs to the ISN1 family. Homotetramer. Mg(2+) serves as cofactor.

The enzyme catalyses IMP + H2O = inosine + phosphate. Its activity is regulated as follows. Allosterically activated by ATP. ATP binding is a prerequisite to magnesium and substrate binding. ATP binds to 2 of the subunits in the homotetramer inducing a closure of these 2 subunits and the release of the C-terminal loop, thereby activating the enzyme. IMP-specific 5'-nucleotidase involved in IMP (inositol monophosphate) degradation. This is IMP-specific 5'-nucleotidase 1 (isn-1) from Neurospora crassa (strain ATCC 24698 / 74-OR23-1A / CBS 708.71 / DSM 1257 / FGSC 987).